Consider the following 160-residue polypeptide: NADH-quinone oxidoreductase subunit B (160 aa).

[4Fe-4S] cluster-binding residues include cysteine 39, cysteine 40, cysteine 104, and cysteine 135.

Belongs to the complex I 20 kDa subunit family. As to quaternary structure, NDH-1 is composed of 14 different subunits. Subunits NuoB, C, D, E, F, and G constitute the peripheral sector of the complex. [4Fe-4S] cluster is required as a cofactor.

It localises to the cell membrane. The catalysed reaction is a quinone + NADH + 5 H(+)(in) = a quinol + NAD(+) + 4 H(+)(out). NDH-1 shuttles electrons from NADH, via FMN and iron-sulfur (Fe-S) centers, to quinones in the respiratory chain. The immediate electron acceptor for the enzyme in this species is believed to be a menaquinone. Couples the redox reaction to proton translocation (for every two electrons transferred, four hydrogen ions are translocated across the cytoplasmic membrane), and thus conserves the redox energy in a proton gradient. This Amoebophilus asiaticus (strain 5a2) protein is NADH-quinone oxidoreductase subunit B.